The sequence spans 1439 residues: Microtubule organization protein AKNA (1439 aa).

Basic and acidic residues-rich tracts occupy residues 1 to 10 and 25 to 35; these read MASSETEIRW and AWAEDKRDVDR. The interval 1-394 is disordered; it reads MASSETEIRW…NRKPQAPARP (394 aa). A Phosphoserine modification is found at serine 52. Residues 71 to 83 are compositionally biased toward basic and acidic residues; the sequence is WDPHPQPDGHQDS. Positions 89–99 are enriched in acidic residues; it reads SGEEAEAEDVD. Residues 263-275 are compositionally biased toward polar residues; the sequence is QDSSAPPAQSPQH. Over residues 276 to 285 the composition is skewed to basic and acidic residues; the sequence is ATDRWRRETT. Phosphoserine occurs at positions 316, 499, and 534. Disordered stretches follow at residues 507-562 and 659-682; these read SAEW…SAEQ and IDQT…PALP. Low complexity predominate over residues 533–544; sequence LSPSSLTSMPTL. Phosphoserine occurs at positions 767 and 770. The tract at residues 771-804 is PEST; sequence LPEAMRMEEEEEGEEEEEEEGGGDSLEVDGVAAT. 2 disordered regions span residues 775-942 and 977-1005; these read MRME…QTPE and IPRR…LRQR. Residues 778–792 show a composition bias toward acidic residues; sequence EEEEEGEEEEEEEGG. Serine 848 carries the post-translational modification Phosphoserine. Pro residues predominate over residues 865–875; the sequence is PPGPGVPPHPP. Polar residues-rich tracts occupy residues 879–891, 929–940, and 983–999; these read SAAS…TSLE, SETSRVSPLTQT, and EPST…SSPS. Serine 886 is subject to Phosphoserine. The segment at 911–932 is PEST; it reads HLEETWMASPETDSGFVGSETS. A phosphoserine mark is found at serine 997 and serine 1010. Residues 1095–1165 form a disordered region; it reads LHQPLQGSPT…RARSSSVPRE (71 aa). Positions 1115 to 1123 form a DNA-binding region, a.T hook; the sequence is RTRGRPADS. Residues 1135 to 1147 show a composition bias toward basic and acidic residues; that stretch reads STERLPGEPRGEE. 2 positions are modified to phosphoserine: serine 1172 and serine 1173. The interval 1180-1211 is disordered; it reads LPLFSEKSKTTKDSPQAARDGKRGVGSAGWPD. Position 1228 is a phosphoserine (serine 1228). The interval 1252-1329 is disordered; that stretch reads AGGAVTGDPL…RPPPGLWYLA (78 aa). Over residues 1303–1317 the composition is skewed to polar residues; sequence SSTPSPKQRSKQAGS. Phosphoserine occurs at positions 1377, 1387, and 1424.

The protein belongs to the AKNA family. As to quaternary structure, interacts with DCTN1. Interacts with MAPRE1/EB1. Interacts with ODF2. Interacts with CAMSAP3. In terms of processing, phosphorylated; phosphorylation regulates dissociation from and reassembly at the centrosome. As to expression, predominantly expressed by lymphoid tissues. Highly expressed in the spleen, lymph nodes and peripheral blood leukocytes, expressed at lower level in the thymus. Mainly expressed by germinal center B-lymphocytes, a stage in which receptor and ligand interactions are crucial for B-lymphocyte maturation. Expressed by B- and T-lymphocytes, Natural killer cells and CD1a(+)CD14(-) but not CD1a(-)CD14(+) dendritic cells. Weakly or not expressed in fetal liver and in adult bone marrow.

It localises to the cytoplasm. Its subcellular location is the cytoskeleton. The protein resides in the microtubule organizing center. It is found in the centrosome. The protein localises to the centriole. It localises to the nucleus. Functionally, centrosomal protein that plays a key role in cell delamination by regulating microtubule organization. Required for the delamination and retention of neural stem cells from the subventricular zone during neurogenesis. Also regulates the epithelial-to-mesenchymal transition in other epithelial cells. Acts by increasing centrosomal microtubule nucleation and recruiting nucleation factors and minus-end stabilizers, thereby destabilizing microtubules at the adherens junctions and mediating constriction of the apical endfoot. In addition, may also act as a transcription factor that specifically activates the expression of the CD40 receptor and its ligand CD40L/CD154, two cell surface molecules on lymphocytes that are critical for antigen-dependent-B-cell development. Binds to A/T-rich promoters. It is unclear how it can both act as a microtubule organizer and as a transcription factor; additional evidences are required to reconcile these two apparently contradictory functions. This chain is Microtubule organization protein AKNA, found in Homo sapiens (Human).